The following is a 507-amino-acid chain: UDP-N-acetylhexosamine pyrophosphorylase-like protein 1 (507 aa).

The Substrate binding signature appears at 111–114 (LAGG). UTP-binding positions include 111–114 (LAGG), Lys125, Gln199, and Gly225. A substrate-binding site is contributed by Asn226. Asp256 is a UTP binding site. Residues 306–307 (EY) carry the Substrate binding motif. Lys380 contributes to the UTP binding site. Lys410 provides a ligand contact to substrate.

This sequence belongs to the UDPGP type 1 family.

The polypeptide is UDP-N-acetylhexosamine pyrophosphorylase-like protein 1 (Uap1l1) (Mus musculus (Mouse)).